We begin with the raw amino-acid sequence, 163 residues long: ATP synthase subunit b (163 aa).

Residues 9–29 (GLLIAQLINVVFVVWLLTTFL) form a helical membrane-spanning segment.

This sequence belongs to the ATPase B chain family. In terms of assembly, F-type ATPases have 2 components, F(1) - the catalytic core - and F(0) - the membrane proton channel. F(1) has five subunits: alpha(3), beta(3), gamma(1), delta(1), epsilon(1). F(0) has four main subunits: a(1), b(2) and c(10-14). The alpha and beta chains form an alternating ring which encloses part of the gamma chain. F(1) is attached to F(0) by a central stalk formed by the gamma and epsilon chains, while a peripheral stalk is formed by the delta and b chains.

It is found in the cell membrane. In terms of biological role, f(1)F(0) ATP synthase produces ATP from ADP in the presence of a proton or sodium gradient. F-type ATPases consist of two structural domains, F(1) containing the extramembraneous catalytic core and F(0) containing the membrane proton channel, linked together by a central stalk and a peripheral stalk. During catalysis, ATP synthesis in the catalytic domain of F(1) is coupled via a rotary mechanism of the central stalk subunits to proton translocation. Functionally, component of the F(0) channel, it forms part of the peripheral stalk, linking F(1) to F(0). The protein is ATP synthase subunit b of Roseiflexus castenholzii (strain DSM 13941 / HLO8).